Reading from the N-terminus, the 301-residue chain is 4-hydroxy-tetrahydrodipicolinate synthase (301 aa).

Thr-46 serves as a coordination point for pyruvate. Tyr-134 (proton donor/acceptor) is an active-site residue. Lys-162 acts as the Schiff-base intermediate with substrate in catalysis. Ile-203 provides a ligand contact to pyruvate.

This sequence belongs to the DapA family. In terms of assembly, homotetramer; dimer of dimers.

It is found in the cytoplasm. It carries out the reaction L-aspartate 4-semialdehyde + pyruvate = (2S,4S)-4-hydroxy-2,3,4,5-tetrahydrodipicolinate + H2O + H(+). It participates in amino-acid biosynthesis; L-lysine biosynthesis via DAP pathway; (S)-tetrahydrodipicolinate from L-aspartate: step 3/4. In terms of biological role, catalyzes the condensation of (S)-aspartate-beta-semialdehyde [(S)-ASA] and pyruvate to 4-hydroxy-tetrahydrodipicolinate (HTPA). This chain is 4-hydroxy-tetrahydrodipicolinate synthase, found in Anaplasma marginale (strain Florida).